The following is a 532-amino-acid chain: MAPSGPQPALPILVVLLGALLLGPGNAQTSVFPPEVILPRGGSVKVNCSASCDQPISLGMETPLPKKEILPGGNNWKMYELSNVQEDSQPMCYSNCPDGQSSAKTLLTVYWTPERVELAPLPPWQPVGKNLTLRCQVEGGAPRANLTVMLLRGEKELSRQSAVGEPAEVTTTVPVGRDDHGANFSCRTELDLRPYVLKLFENTSAPHQLQTFDLPATPPQLVSPQVLEVDTQGTVVCSLDGLFPVSEAQVSLALGDQKLNPTITYGNNSLSAKASVKVTAEEEGTQQLLCGVMLGNQTQETRQTVTIYSFPAPNVNLTKPEVSEGTEVIVECEAHPRAKVMLNGVPAQPPGPRAQFLLKATPEDNGRSFSCSATLEVAGQLVHKNQTRELRVLYGPRLDEKDCPGNWTWPENSQQTPMCQAWGNPLPQLKCLKDGTFPLPIGQSVTVTRDLEGTYLCQARSTRGEVTREVTVNVLSPRYEVVIIPVVAAAVILGTAGVATYLYNRQRKIRKYRLQQAQNGTPMKPNTQATPP.

A signal peptide spans 1–27; that stretch reads MAPSGPQPALPILVVLLGALLLGPGNA. Over 28-480 the chain is Extracellular; the sequence is QTSVFPPEVI…TVNVLSPRYE (453 aa). 2 consecutive Ig-like C2-type domains span residues 41 to 103 and 128 to 193; these read GGSV…QSSA and GKNL…LDLR. Residue Asn-47 is glycosylated (N-linked (GlcNAc...) asparagine). Disulfide bonds link Cys-48-Cys-92 and Cys-52-Cys-96. 2 N-linked (GlcNAc...) asparagine glycosylation sites follow: Asn-130 and Asn-145. A disulfide bond links Cys-135 and Cys-186. Positions 152–154 match the Cell attachment site; atypical motif; it reads RGE. 5 N-linked (GlcNAc...) asparagine glycosylation sites follow: Asn-183, Asn-202, Asn-267, Asn-296, and Asn-316. One can recognise an Ig-like C2-type 3 domain in the interval 230-297; that stretch reads DTQGTVVCSL…LLCGVMLGNQ (68 aa). Cys-237 and Cys-290 are disulfide-bonded. The region spanning 325 to 378 is the Ig-like C2-type 4 domain; it reads GTEVIVECEAHPRAKVMLNGVPAQPPGPRAQFLLKATPEDNGRSFSCSATLEVA. Cys-332 and Cys-371 are oxidised to a cystine. Asn-385 and Asn-406 each carry an N-linked (GlcNAc...) asparagine glycan. Intrachain disulfides connect Cys-403-Cys-419, Cys-419-Cys-457, and Cys-431-Cys-457. An Ig-like C2-type 5 domain is found at 412–464; it reads NSQQTPMCQAWGNPLPQLKCLKDGTFPLPIGQSVTVTRDLEGTYLCQARSTRG. A helical membrane pass occupies residues 481-503; that stretch reads VVIIPVVAAAVILGTAGVATYLY. The Cytoplasmic segment spans residues 504 to 532; it reads NRQRKIRKYRLQQAQNGTPMKPNTQATPP. The tract at residues 513-532 is disordered; that stretch reads RLQQAQNGTPMKPNTQATPP. Residues 515-532 are compositionally biased toward polar residues; that stretch reads QQAQNGTPMKPNTQATPP. Residues Thr-521 and Thr-530 each carry the phosphothreonine modification.

Belongs to the immunoglobulin superfamily. ICAM family. In terms of assembly, homodimer. Interacts with MUC1 and promotes cell aggregation in epithelial cells. Interacts with ARHGEF26/SGEF. Interacts (on T cell side) with CD81, CD247 and CD9 at immunological synapses between antigen-presenting cells and T cells. Post-translationally, monoubiquitinated, which is promoted by MARCH9 and leads to endocytosis.

It is found in the membrane. Functionally, ICAM proteins are ligands for the leukocyte adhesion protein LFA-1 (integrin alpha-L/beta-2). During leukocyte trans-endothelial migration, ICAM1 engagement promotes the assembly of endothelial apical cups through ARHGEF26/SGEF and RHOG activation. The chain is Intercellular adhesion molecule 1 (ICAM1) from Macaca mulatta (Rhesus macaque).